The chain runs to 868 residues: Rifampicin phosphotransferase (868 aa).

Positions 1 to 313 (MSSFVLDFQE…IYIVQSRPIT (313 aa)) are ATP-binding. Residues Lys-22, Arg-116, Gly-131, Thr-135, Gln-182, Glu-296, Gln-308, and Arg-310 each contribute to the ATP site. The tract at residues 326–756 (NHVYISVGHQ…TSDGEIITGK (431 aa)) is rifampicin-binding. Residues 769–867 (GLPVSSGVVE…VHGTEGYIEV (99 aa)) form a swivel phosphohistidine region. The active-site Tele-phosphohistidine intermediate is the His-827.

This sequence belongs to the rifampicin phosphotransferase family.

It carries out the reaction rifampicin + ATP + H2O = 21-phosphorifampicin + AMP + phosphate + 2 H(+). Functionally, catalyzes the phosphorylation of rifampicin, also known as rifampin (RIF), leading to its inactivation. Confers high level resistance to a variety of clinically used rifamycin antibiotics. Does not show phosphoenolpyruvate (PEP) synthase activity. The sequence is that of Rifampicin phosphotransferase from Bacillus cereus (strain ATCC 14579 / DSM 31 / CCUG 7414 / JCM 2152 / NBRC 15305 / NCIMB 9373 / NCTC 2599 / NRRL B-3711).